The primary structure comprises 2812 residues: Zonadhesin (2812 aa).

The first 17 residues, 1-17 (MVPPVWTLLLLVGAALF), serve as a signal peptide directing secretion. The Extracellular segment spans residues 18–2757 (RKEKPPDQKL…DAPPPRKPAS (2740 aa)). 3 MAM domains span residues 39 to 204 (TQCD…SCNR), 209 to 368 (QTCS…PCGE), and 371 to 536 (PQCD…TCPV). The interval 61–84 (EDWVRASGPSPTGSTGAPGGYPNG) is disordered. Positions 66 to 75 (ASGPSPTGST) are enriched in low complexity. Residues asparagine 333 and asparagine 493 are each glycosylated (N-linked (GlcNAc...) asparagine). Disordered stretches follow at residues 545-884 (VSPV…PTEK) and 904-929 (EKPT…KPTI). The segment covering 547–558 (PVSSTGPSETTG) has biased composition (low complexity). Residues 559-570 (LTENPTISTKKP) are compositionally biased toward polar residues. The interval 573-1041 (SIEKPSVTTE…GTTTTSRSST (469 aa)) is 66 X heptapeptide repeats (approximate) (mucin-like domain). 5 stretches are compositionally biased toward low complexity: residues 592-603 (TIPTEKPTISTE), 651-675 (TEKP…MEEP), 713-842 (SPEK…STEK), 853-868 (STEK…TISP), and 916-929 (STEK…KPTI). In terms of domain architecture, TIL 1 spans 1044–1093 (CPPNARYESCACPASCKSPRPSCGPLCREGCVCNPGFLFSDNHCIQASSC). Residues 1103–1148 (EPGAEWFSPNCTEHCRCWPGSRVECQISQCGTHTVCQLKNGQYGCH) form the VWFC 1 domain. Residues asparagine 1112 and asparagine 1188 are each glycosylated (N-linked (GlcNAc...) asparagine). Residues 1154–1331 (ATCLVYGDPH…TDQDEDQECQ (178 aa)) enclose the VWFD 1 domain. 2 disulfides stabilise this stretch: cysteine 1156–cysteine 1291 and cysteine 1178–cysteine 1330. A compositionally biased stretch (basic and acidic residues) spans 1302–1316 (HLKLDGSPAGDKEEL). Positions 1302–1323 (HLKLDGSPAGDKEELGNSWQTD) are disordered. One can recognise a TIL 2 domain in the interval 1426–1479 (CPPNSKYSLCAKPCPDTCHSGFSGMFCSDRCVEACECNPGFVLSGLECIPRSQC). Residues 1480 to 1535 (GCLHPAGSYFKVGERWYKPGCKELCVCESNNRIRCQPWRCRAQEFCGQQDGIYGCH) form the VWFC 2 domain. One can recognise a VWFD 2 domain in the interval 1540 to 1720 (ATCTASGDPH…LPESSEPGCF (181 aa)). 2 disulfides stabilise this stretch: cysteine 1542–cysteine 1680 and cysteine 1564–cysteine 1719. N-linked (GlcNAc...) asparagine glycans are attached at residues asparagine 1685 and asparagine 1804. The 56-residue stretch at 1812–1867 (CPPGSSYSPCSSPCPDTCSSINNPRDCPKALPCAESCECQKGHILSGTSCVPLGQC) folds into the TIL 3 domain. The VWFC 3 domain occupies 1868–1924 (GCTDPAGSYHPVGERWYTENTCTRLCTCSVHNNITCFQSTCKPNQICWALDGLLHCR). Residues asparagine 1900 and asparagine 1946 are each glycosylated (N-linked (GlcNAc...) asparagine). The 180-residue stretch at 1929–2108 (GVCQLPGESH…KDKDIDPSCQ (180 aa)) folds into the VWFD 3 domain. 2 disulfides stabilise this stretch: cysteine 1931–cysteine 2069 and cysteine 1953–cysteine 2107. Residue asparagine 2203 is glycosylated (N-linked (GlcNAc...) asparagine). The TIL 4 domain maps to 2211 to 2267 (CPAYSSYTNCLPSCSPSCWDLDGRCEGAKVPSACAEGCICQPGYVLSEDKCVPRSQC). Residues 2268–2329 (GCKDAHGGSI…NSNCVSDKSE (62 aa)) form the VWFC 4 domain. The VWFD 4 domain occupies 2329–2505 (EQCSVYGDPR…SWEVKTEDAL (177 aa)). Cysteine 2331 and cysteine 2468 are oxidised to a cystine. N-linked (GlcNAc...) asparagine glycosylation is found at asparagine 2542 and asparagine 2701. In terms of domain architecture, VWFC 5 spans 2652-2797 (CGCTSNGIYY…KREKTQEGDR (146 aa)). Residues 2708 to 2744 (PESPCLQNPCQNDGQCREQGATFTCECEVGYGGGLCM) enclose the EGF-like domain. Intrachain disulfides connect cysteine 2712/cysteine 2723, cysteine 2717/cysteine 2732, and cysteine 2734/cysteine 2743. Residues 2758–2778 (NLVGVLLGLLVPVVVVLLAVT) form a helical membrane-spanning segment. Residues 2779–2812 (RECIYRTRRKREKTQEGDRLARLVDTDTVLDCAC) are Cytoplasmic-facing.

As to quaternary structure, probably forms covalent oligomers. In testis, primarily in haploid spermatids.

It is found in the cell membrane. Its function is as follows. Binds in a species-specific manner to the zona pellucida of the egg. May be involved in gamete recognition and/or signaling. The chain is Zonadhesin (ZAN) from Homo sapiens (Human).